Here is a 395-residue protein sequence, read N- to C-terminus: Zinc finger protein 200 (395 aa).

The disordered stretch occupies residues 157–208 (VNGSNPEGEDPEREPVENEDYREKSSDDDEMDSSLVSQQPPDNQEKERLNTS). The segment covering 169–181 (REPVENEDYREKS) has biased composition (basic and acidic residues). Residues 246 to 395 (RRTRRWYTCP…HSACKTRKQK (150 aa)) form an interaction with PRMT3 region. 5 consecutive C2H2-type zinc fingers follow at residues 252–274 (YTCP…QRTH), 280–302 (YDCN…ERIH), 308–330 (YSCS…EGIH), 336–358 (FKCP…LQSH), and 364–386 (YGCK…EKTH).

In terms of assembly, interacts (via C-terminus) with PRMT3 (via zinc-finger); the interaction is direct and required to localize protein arginine N-methyltransferase PRMT3 to the nucleus and inhibit its proteasomal degradation. As to expression, highly expressed in testis, weakly expressed in spleen, thymus, prostate, ovary, small intestine colon and peripheral blood leukocytes.

The protein resides in the nucleus. Its function is as follows. Localizes protein arginine N-methyltransferase PRMT3 to the nucleus. The chain is Zinc finger protein 200 (ZNF200) from Homo sapiens (Human).